A 145-amino-acid chain; its full sequence is Large ribosomal subunit protein uL16 (145 aa).

The segment covering 76–95 (PKTKTPAETRMGKGKGEPEH) has biased composition (basic and acidic residues). The disordered stretch occupies residues 76-97 (PKTKTPAETRMGKGKGEPEHFV).

The protein belongs to the universal ribosomal protein uL16 family. Part of the 50S ribosomal subunit.

Binds 23S rRNA and is also seen to make contacts with the A and possibly P site tRNAs. In Salinibacter ruber (strain DSM 13855 / M31), this protein is Large ribosomal subunit protein uL16.